A 298-amino-acid chain; its full sequence is Protease HtpX (298 aa).

A run of 2 helical transmembrane segments spans residues 4–24 and 38–58; these read IGLFLLTNIAVLAVAMITMNL and LGNLFAFAAIIGFAGSFVSLA. Position 145 (His-145) interacts with Zn(2+). Glu-146 is an active-site residue. His-149 lines the Zn(2+) pocket. Helical transmembrane passes span 160-180 and 194-214; these read LLQGVVNTFVIFFAKIVAYVV and ITFIVVDIVAQILFGILASMI. Glu-223 serves as a coordination point for Zn(2+).

Belongs to the peptidase M48B family. Zn(2+) serves as cofactor.

The protein localises to the cell inner membrane. This chain is Protease HtpX, found in Hydrogenovibrio crunogenus (strain DSM 25203 / XCL-2) (Thiomicrospira crunogena).